Reading from the N-terminus, the 23-residue chain is Paralytic peptide 1 (23 aa).

A disulfide bond links C7 and C19.

The protein belongs to the GBP/PSP1/paralytic peptide family. As to expression, hemolymph.

Causes rapid, rigid paralysis when injected into Lepidopteran larvae. The physiological role may be to reduce hemolymph loss following injury and promote wound healing. The sequence is that of Paralytic peptide 1 from Heliothis virescens (Tobacco budworm moth).